We begin with the raw amino-acid sequence, 335 residues long: Abasic site processing protein HMCES (335 aa).

Residue cysteine 2 is the Nucleophile of the active site. Cysteine 2 carries the post-translational modification Thiazolidine linkage to a ring-opened DNA abasic site. Residues 24–39 (QGGRKWPNWRDGDSDK) are compositionally biased toward basic and acidic residues. The tract at residues 24–51 (QGGRKWPNWRDGDSDKYQPSYNKSPQSN) is disordered. Residues 40 to 51 (YQPSYNKSPQSN) are compositionally biased toward polar residues. The active site involves glutamate 129. Residues 284-335 (LQNKSPKKEESHSIQSPKLSQFGAPPKKTSAGLMQQWLKKEDGEPSPKRAKK) form a disordered region. A compositionally biased stretch (basic and acidic residues) spans 321-335 (LKKEDGEPSPKRAKK).

This sequence belongs to the SOS response-associated peptidase family. Ubiquitination of the hmces DNA-protein cross-link by rfwd3 may promotes its degradation.

It localises to the chromosome. Its activity is regulated as follows. Formation and reversal of DNA-protein cross-link depends on DNA context. Catalyzes formation of the thiazolidine linkage in presence of abasic sites in single-stranded DNA. Mediates the reversal of the thiazolidine cross-link in presence of double stranded DNA. Its function is as follows. Sensor of abasic sites in single-stranded DNA (ssDNA) required to preserve genome integrity by promoting error-free repair of abasic sites. Acts as an enzyme that recognizes and binds abasic sites in ssDNA at replication forks and chemically modifies the lesion by forming a covalent cross-link with DNA: forms a stable thiazolidine linkage between a ring-opened abasic site and the alpha-amino and sulfhydryl substituents of its N-terminal catalytic cysteine residue. The hmces DNA-protein cross-link is then either reversed or degraded. Hmces is able to catalyze the reversal of its thiazolidine cross-link and cycle between a cross-link and a non-cross-linked state depending on DNA context: mediates self-reversal of the thiazolidine cross-link in double stranded DNA, allowing apex1 to initiate downstream repair of abasic sites. The hmces DNA-protein cross-link can also be degraded by the sprtn metalloprotease following unfolding by the brip1/fancj helicase. Promotes error-free repair of abasic sites by protecting abasic sites from translesion synthesis (TLS) polymerases and endonucleases that are error-prone and would generate mutations and double-strand breaks. Acts as a protease: mediates autocatalytic processing of its N-terminal methionine in order to expose the catalytic cysteine. The hmces DNA-protein cross-link is then either reversed or degraded. According to a model, the HMCES DNA-protein cross-link. The protein is Abasic site processing protein HMCES of Xenopus tropicalis (Western clawed frog).